The sequence spans 274 residues: Thiamine kinase (274 aa).

The protein belongs to the thiamine kinase family.

It carries out the reaction thiamine + ATP = thiamine phosphate + ADP + H(+). It functions in the pathway cofactor biosynthesis; thiamine diphosphate biosynthesis; thiamine phosphate from thiamine: step 1/1. In terms of biological role, catalyzes the ATP-dependent phosphorylation of thiamine to thiamine phosphate. Is involved in thiamine salvage. This Escherichia coli (strain K12 / MC4100 / BW2952) protein is Thiamine kinase.